Consider the following 380-residue polypeptide: Succinate--CoA ligase [ADP-forming] subunit beta 2 (380 aa).

Positions 9 to 235 constitute an ATP-grasp domain; it reads KQIFSKHGIR…YTEADQMERI (227 aa). Residues Lys45, 52-54, Glu91, Ile94, and Glu99 each bind ATP; that span reads GRG. Mg(2+) contacts are provided by Asn191 and Asp204. Substrate is bound by residues Asn255 and 312-314; that span reads GIT.

Belongs to the succinate/malate CoA ligase beta subunit family. Heterotetramer of two alpha and two beta subunits. Mg(2+) is required as a cofactor.

The enzyme catalyses succinate + ATP + CoA = succinyl-CoA + ADP + phosphate. The catalysed reaction is GTP + succinate + CoA = succinyl-CoA + GDP + phosphate. Its pathway is carbohydrate metabolism; tricarboxylic acid cycle; succinate from succinyl-CoA (ligase route): step 1/1. In terms of biological role, succinyl-CoA synthetase functions in the citric acid cycle (TCA), coupling the hydrolysis of succinyl-CoA to the synthesis of either ATP or GTP and thus represents the only step of substrate-level phosphorylation in the TCA. The beta subunit provides nucleotide specificity of the enzyme and binds the substrate succinate, while the binding sites for coenzyme A and phosphate are found in the alpha subunit. This chain is Succinate--CoA ligase [ADP-forming] subunit beta 2, found in Archaeoglobus fulgidus (strain ATCC 49558 / DSM 4304 / JCM 9628 / NBRC 100126 / VC-16).